The following is a 378-amino-acid chain: Poly(3-hydroxyalkanoate) polymerase subunit PhaC (378 aa).

Residues 84 to 356 (PVLIVYALVN…QSFPVGHIGM (273 aa)) form the AB hydrolase-1 domain.

This sequence belongs to the PHA/PHB synthase family. Type III PhaC subfamily. Forms a heterodimer with PhaE, which may multimerize in the presence of 3-hydroxybutyryl-CoA. Both subunits are required for PHB synthesis in E.coli and in PHA-negative A.eutrophus.

It is found in the cytoplasm. It carries out the reaction (3R)-3-hydroxybutanoyl-CoA + [(3R)-hydroxybutanoate](n) = [(3R)-hydroxybutanoate](n+1) + CoA. It functions in the pathway biopolymer metabolism; poly-(R)-3-hydroxybutanoate biosynthesis. In terms of biological role, when expressed in E.coli with Synechocystis PhaE and C.necator PhaA and PhaB, confers the ability to synthesize up to 13% (w/w) poly(3-hydroxybutyrate) (PHB) depending on the carbon source; all 4 genes are necessary for PHB production. Cell-free in vitro coexpression with PhaE gives a heterodimer able to polymerize 3-hydroxybutyrate-CoA. The protein is Poly(3-hydroxyalkanoate) polymerase subunit PhaC of Synechocystis sp. (strain ATCC 27184 / PCC 6803 / Kazusa).